Consider the following 331-residue polypeptide: Biotin synthase (331 aa).

Positions 39–264 (SELQTCYLIS…VFPRSMVRLA (226 aa)) constitute a Radical SAM core domain. Residues Cys-54, Cys-58, and Cys-61 each coordinate [4Fe-4S] cluster. [2Fe-2S] cluster contacts are provided by Cys-98, Cys-130, Cys-190, and Arg-262.

It belongs to the radical SAM superfamily. Biotin synthase family. In terms of assembly, homodimer. It depends on [4Fe-4S] cluster as a cofactor. [2Fe-2S] cluster is required as a cofactor.

It carries out the reaction (4R,5S)-dethiobiotin + (sulfur carrier)-SH + 2 reduced [2Fe-2S]-[ferredoxin] + 2 S-adenosyl-L-methionine = (sulfur carrier)-H + biotin + 2 5'-deoxyadenosine + 2 L-methionine + 2 oxidized [2Fe-2S]-[ferredoxin]. It functions in the pathway cofactor biosynthesis; biotin biosynthesis; biotin from 7,8-diaminononanoate: step 2/2. Catalyzes the conversion of dethiobiotin (DTB) to biotin by the insertion of a sulfur atom into dethiobiotin via a radical-based mechanism. In Chlamydia pneumoniae (Chlamydophila pneumoniae), this protein is Biotin synthase.